An 858-amino-acid chain; its full sequence is DNA mismatch repair protein MutS (858 aa).

613 to 620 lines the ATP pocket; that stretch reads GPNMAGKS.

It belongs to the DNA mismatch repair MutS family.

Functionally, this protein is involved in the repair of mismatches in DNA. It is possible that it carries out the mismatch recognition step. This protein has a weak ATPase activity. In Dehalococcoides mccartyi (strain ATCC BAA-2266 / KCTC 15142 / 195) (Dehalococcoides ethenogenes (strain 195)), this protein is DNA mismatch repair protein MutS.